The following is a 913-amino-acid chain: DNA repair endonuclease XPF (913 aa).

The tract at residues methionine 1–aspartate 454 is helicase-like. Leucine-zipper stretches follow at residues leucine 233–leucine 254 and leucine 270–leucine 298. Position 289 is an N6-acetyllysine (lysine 289). The segment covering glycine 453 to serine 476 has biased composition (basic and acidic residues). Disordered stretches follow at residues glycine 453–glutamate 525 and valine 638–threonine 677. The Nuclear localization signal signature appears at lysine 483 to glutamate 488. Residues glutamate 500–glutamate 509 are compositionally biased toward acidic residues. At serine 518 the chain carries Phosphoserine. Over residues valine 638–threonine 649 the composition is skewed to basic and acidic residues. The nuclease stretch occupies residues arginine 655–phenylalanine 810. Residues serine 680 to alanine 760 form the ERCC4 domain. The tract at residues threonine 834 to tyrosine 902 is hhH2, dimerization with ERCC1.

It belongs to the XPF family. As to quaternary structure, heterodimer composed of ERCC1 and ERCC4/XPF. Interacts with SLX4/BTBD12; this interaction is direct and links the ERCC1-ERCC4/XPF complex to SLX4, which may coordinate the action of the structure-specific endonuclease during DNA repair. It depends on Mg(2+) as a cofactor.

The protein localises to the nucleus. It is found in the chromosome. Its function is as follows. Catalytic component of a structure-specific DNA repair endonuclease responsible for the 5-prime incision during DNA repair, and which is essential for nucleotide excision repair (NER) and interstrand cross-link (ICL) repair. The chain is DNA repair endonuclease XPF from Cricetulus griseus (Chinese hamster).